The chain runs to 103 residues: Endoribonuclease MazF3 (103 aa).

It belongs to the PemK/MazF family. As to quaternary structure, forms a complex with cognate antitoxin MazE3.

In terms of biological role, toxic component of a type II toxin-antitoxin (TA) system. Acts as an endoribonuclease, cleaving in U-rich regions. Neutralized by cognate antitoxin MazE3. This chain is Endoribonuclease MazF3 (mazF3), found in Mycobacterium tuberculosis (strain CDC 1551 / Oshkosh).